The chain runs to 215 residues: FBD domain-containing protein At3g58975 (215 aa).

Residues 122-199 (RSLTSCPVKK…KLSSCNVQLL (78 aa)) form the FBD domain.

This Arabidopsis thaliana (Mouse-ear cress) protein is FBD domain-containing protein At3g58975.